The sequence spans 370 residues: Uroporphyrinogen decarboxylase (370 aa).

Substrate is bound by residues 29–33 (RQAGR), Asp-79, Tyr-155, Ser-210, and His-342.

The protein belongs to the uroporphyrinogen decarboxylase family. As to quaternary structure, homodimer.

The protein resides in the cytoplasm. The catalysed reaction is uroporphyrinogen III + 4 H(+) = coproporphyrinogen III + 4 CO2. It participates in porphyrin-containing compound metabolism; protoporphyrin-IX biosynthesis; coproporphyrinogen-III from 5-aminolevulinate: step 4/4. Its function is as follows. Catalyzes the decarboxylation of four acetate groups of uroporphyrinogen-III to yield coproporphyrinogen-III. The chain is Uroporphyrinogen decarboxylase from Delftia acidovorans (strain DSM 14801 / SPH-1).